Here is a 279-residue protein sequence, read N- to C-terminus: Elongation factor Ts (279 aa).

An involved in Mg(2+) ion dislocation from EF-Tu region spans residues 80 to 83 (TDFV).

It belongs to the EF-Ts family.

It is found in the cytoplasm. Associates with the EF-Tu.GDP complex and induces the exchange of GDP to GTP. It remains bound to the aminoacyl-tRNA.EF-Tu.GTP complex up to the GTP hydrolysis stage on the ribosome. The sequence is that of Elongation factor Ts from Borreliella burgdorferi (strain ZS7) (Borrelia burgdorferi).